The primary structure comprises 212 residues: MRVRNRKGATELLEANPQYVVLNPADAKGKWQELFGNDHPIHIEVGSGKGAFITGMAKANPNINYIGIDIQKSVLSYALDKVLATDVPNIKLLWVDGSDLTNYFADGEIERLYLNFSDPWPKKRHEKRRLTYKSFLDTFKQILPEKGEVHFKTDNRGLFEYSLVSFSQYGMKLKGVWLDLHASDFEGNVLTEYEQKFSSKGQVIYRVEAVFQ.

S-adenosyl-L-methionine contacts are provided by Glu-44, Asp-69, Asp-96, and Asp-118. Asp-118 is a catalytic residue. Substrate is bound at residue Lys-122. The segment at 124–129 (RHEKRR) is interaction with RNA. Residues Asp-154 and 191–194 (TEYE) each bind substrate.

It belongs to the class I-like SAM-binding methyltransferase superfamily. TrmB family.

The enzyme catalyses guanosine(46) in tRNA + S-adenosyl-L-methionine = N(7)-methylguanosine(46) in tRNA + S-adenosyl-L-homocysteine. It participates in tRNA modification; N(7)-methylguanine-tRNA biosynthesis. Functionally, catalyzes the formation of N(7)-methylguanine at position 46 (m7G46) in tRNA. This Streptococcus gordonii (strain Challis / ATCC 35105 / BCRC 15272 / CH1 / DL1 / V288) protein is tRNA (guanine-N(7)-)-methyltransferase.